A 221-amino-acid chain; its full sequence is Immunoregulatory peptides (221 aa).

The N-terminal stretch at 1–19 (MNYLCLVVTLVAVAGAISG) is a signal peptide. Positions 20-45 (EKFSDDNTGYQSTPSLRIRTTPGRRR) are excised as a propeptide. The tract at residues 21-155 (KFSDDNTGYQ…PRTIGPPYTR (135 aa)) is disordered. Residues 25-34 (DNTGYQSTPS) are compositionally biased toward polar residues. The span at 48 to 69 (PRTIGPPYTRRTLRTTTDYSTT) shows a compositional bias: low complexity. Polar residues-rich tracts occupy residues 70–85 (VENG…STEK) and 123–133 (NGTTPAANSTE). Residues 191–221 (EISWTFGPLYTWRTTKGYGTTLETTNATSTS) constitute a propeptide that is removed on maturation.

Salivary glands.

The protein localises to the secreted. In terms of biological role, suppress host inflammatory response. Exerts significant anti-inflammatory functions, either by directly inhibiting host secretion of inflammatory factors such as tumor necrosis factor-alpha (TNF), monocyte chemotactic protein-1 (CCL2), and interferon-gamma (IFNG) or by indirectly increasing the secretion of immunosuppressant cytokine of interleukin-10 (IL10). Also potently scavenges free radical in vitro in a rapid manner. All tested concentrations of this peptide have little effect on the cell viability. In vivo, inhibits hind paw adjuvant-induced inflammation in mouse in a dose-dependent manner. Its function is as follows. Suppress host inflammatory response. Exerts significant anti-inflammatory functions, either by directly inhibiting host secretion of inflammatory factors such as tumor necrosis factor-alpha (TNF), monocyte chemotactic protein-1 (CCL2), and interferon-gamma (IFNG) or by indirectly increasing the secretion of immunosuppressant cytokine of interleukin-10 (IL10). Also potently scavenges free radical in vitro in a rapid manner. Low concentrations of this peptide have little effect on the cell viability, whereas high concentrations increase the cell viability by 10-20%. In vivo, inhibits hind paw adjuvant-induced inflammation in mouse in a dose-dependent manner. Functionally, not studied but probably similar to Hyalomin-B1. This Hyalomma asiaticum asiaticum (Tick) protein is Immunoregulatory peptides.